Here is a 328-residue protein sequence, read N- to C-terminus: Cell cycle control protein 50A (328 aa).

A disordered region spans residues 1-28 (MAMNYSAKDEVDGGPTGPPGGAAKTRRP). A2 bears the N-acetylalanine mark. The required for ATPase and aminophospholipid flippase activity stretch occupies residues 2-48 (AMNYSAKDEVDGGPTGPPGGAAKTRRPDNTAFKQQRLPAWQPILTAG). Topologically, residues 2 to 49 (AMNYSAKDEVDGGPTGPPGGAAKTRRPDNTAFKQQRLPAWQPILTAGT) are cytoplasmic. An interaction with ATP8A2 region spans residues 49–315 (TVLPTFFIIG…LGVVLLVINH (267 aa)). Residues 50–70 (VLPTFFIIGLIFIPIGIGIFV) form a helical membrane-spanning segment. At 71–292 (TSNNIREIEG…SWMGGKNPFL (222 aa)) the chain is on the exoplasmic loop side. The segment at 102–125 (RDDSQLNGDPSALLNPSKECEPYR) is disordered. A disulfide bond links C121 and C135. Residues N144 and N261 are each glycosylated (N-linked (GlcNAc...) asparagine). Residues 293-313 (GIAYITIGSISFLLGVVLLVI) traverse the membrane as a helical segment. Topologically, residues 314 to 328 (NHKYRNSSNTADITI) are cytoplasmic.

The protein belongs to the CDC50/LEM3 family. Component of various P4-ATPase flippase complexes which consists of a catalytic alpha subunit and an accessory beta subunit. Interacts with ATP8A1 to form a flippase complex; this complex forms an intermediate phosphoenzyme. Interacts with ATP8A2 to form a flippase complex. TP8B1:TMEM30A and ATP8B2:TMEM30A flippase complexes have been shown to form intermediate phosphoenzymes in vitro. Interacts with alpha subunits ATP8A1, ATP8B1, ATP8B2, ATP8B4, ATP10A, ATP10B, ATP10D, ATP11A, ATP11B and ATP11C. N-glycosylated. Contains high mannose-type oligosaccharides.

The protein resides in the membrane. Its subcellular location is the golgi apparatus. It localises to the cytoplasmic vesicle. The protein localises to the secretory vesicle membrane. It is found in the apical cell membrane. The protein resides in the photoreceptor inner segment. Its subcellular location is the cell projection. It localises to the cilium. The protein localises to the photoreceptor outer segment. Its function is as follows. Accessory component of a P4-ATPase flippase complex which catalyzes the hydrolysis of ATP coupled to the transport of aminophospholipids from the outer to the inner leaflet of various membranes and ensures the maintenance of asymmetric distribution of phospholipids. Phospholipid translocation also seems to be implicated in vesicle formation and in uptake of lipid signaling molecules. The beta subunit may assist in binding of the phospholipid substrate. Required for the proper folding, assembly and ER to Golgi exit of the ATP8A2:TMEM30A flippase complex. ATP8A2:TMEM30A may be involved in regulation of neurite outgrowth, and, reconstituted to liposomes, predomiminantly transports phosphatidylserine (PS) and to a lesser extent phosphatidylethanolamine (PE). The ATP8A1:TMEM30A flippase complex seems to play a role in regulation of cell migration probably involving flippase-mediated translocation of phosphatidylethanolamine (PE) at the plasma membrane. Required for the formation of the ATP8A2, ATP8B1 and ATP8B2 P-type ATPAse intermediate phosphoenzymes. Involved in uptake of platelet-activating factor (PAF). Can also mediate the export of alpha subunits ATP8A1, ATP8B1, ATP8B2, ATP8B4, ATP10A, ATP10B, ATP10D, ATP11A, ATP11B and ATP11C from ER to other membrane localizations. The chain is Cell cycle control protein 50A from Rattus norvegicus (Rat).